A 717-amino-acid chain; its full sequence is Ribosomal RNA large subunit methyltransferase K/L (717 aa).

Residues 44 to 155 (DAYKVCIYSY…KQFVNVFLCL (112 aa)) enclose the THUMP domain.

It belongs to the methyltransferase superfamily. RlmKL family.

It is found in the cytoplasm. It catalyses the reaction guanosine(2445) in 23S rRNA + S-adenosyl-L-methionine = N(2)-methylguanosine(2445) in 23S rRNA + S-adenosyl-L-homocysteine + H(+). It carries out the reaction guanosine(2069) in 23S rRNA + S-adenosyl-L-methionine = N(2)-methylguanosine(2069) in 23S rRNA + S-adenosyl-L-homocysteine + H(+). Its function is as follows. Specifically methylates the guanine in position 2445 (m2G2445) and the guanine in position 2069 (m7G2069) of 23S rRNA. The protein is Ribosomal RNA large subunit methyltransferase K/L of Francisella tularensis subsp. tularensis (strain SCHU S4 / Schu 4).